Here is a 502-residue protein sequence, read N- to C-terminus: Glycerol kinase (502 aa).

Threonine 14 provides a ligand contact to ADP. Residues threonine 14, threonine 15, and serine 16 each contribute to the ATP site. Threonine 14 lines the sn-glycerol 3-phosphate pocket. Arginine 18 contributes to the ADP binding site. 4 residues coordinate sn-glycerol 3-phosphate: arginine 84, glutamate 85, tyrosine 136, and aspartate 246. Glycerol-binding residues include arginine 84, glutamate 85, tyrosine 136, aspartate 246, and glutamine 247. Residues threonine 268 and glycine 311 each contribute to the ADP site. 4 residues coordinate ATP: threonine 268, glycine 311, glutamine 315, and glycine 412. Residues glycine 412 and asparagine 416 each coordinate ADP.

It belongs to the FGGY kinase family. In terms of assembly, homotetramer and homodimer (in equilibrium). Heterodimer with EIIA-Glc. Binds 1 zinc ion per glycerol kinase EIIA-Glc dimer. The zinc ion is important for dimerization.

The catalysed reaction is glycerol + ATP = sn-glycerol 3-phosphate + ADP + H(+). It functions in the pathway polyol metabolism; glycerol degradation via glycerol kinase pathway; sn-glycerol 3-phosphate from glycerol: step 1/1. Its activity is regulated as follows. Activity of this regulatory enzyme is affected by several metabolites. Allosterically and non-competitively inhibited by fructose 1,6-bisphosphate (FBP) and unphosphorylated phosphocarrier protein EIIA-Glc (III-Glc), an integral component of the bacterial phosphotransferase (PTS) system. In terms of biological role, key enzyme in the regulation of glycerol uptake and metabolism. Catalyzes the phosphorylation of glycerol to yield sn-glycerol 3-phosphate. This Escherichia coli O81 (strain ED1a) protein is Glycerol kinase.